We begin with the raw amino-acid sequence, 248 residues long: Probable transcriptional regulatory protein RPE_4771 (248 aa).

Positions 1–21 (MAGHSQFKNIMHRKGRQDAQK) are disordered.

Belongs to the TACO1 family.

The protein resides in the cytoplasm. The protein is Probable transcriptional regulatory protein RPE_4771 of Rhodopseudomonas palustris (strain BisA53).